The sequence spans 363 residues: NAD(P)H-quinone oxidoreductase subunit 1, chloroplastic (363 aa).

6 helical membrane-spanning segments follow: residues 30–50 (FLPI…IVWL), 104–124 (IAVI…HLVL), 129–149 (IGVF…LMSG), 248–268 (YSGI…LVSS), 300–320 (VFGT…FLFI), and 343–363 (FLLP…LLSL).

The protein belongs to the complex I subunit 1 family. NDH is composed of at least 16 different subunits, 5 of which are encoded in the nucleus.

It is found in the plastid. The protein resides in the chloroplast thylakoid membrane. The enzyme catalyses a plastoquinone + NADH + (n+1) H(+)(in) = a plastoquinol + NAD(+) + n H(+)(out). It carries out the reaction a plastoquinone + NADPH + (n+1) H(+)(in) = a plastoquinol + NADP(+) + n H(+)(out). Functionally, NDH shuttles electrons from NAD(P)H:plastoquinone, via FMN and iron-sulfur (Fe-S) centers, to quinones in the photosynthetic chain and possibly in a chloroplast respiratory chain. The immediate electron acceptor for the enzyme in this species is believed to be plastoquinone. Couples the redox reaction to proton translocation, and thus conserves the redox energy in a proton gradient. The sequence is that of NAD(P)H-quinone oxidoreductase subunit 1, chloroplastic from Eucalyptus globulus subsp. globulus (Tasmanian blue gum).